Consider the following 340-residue polypeptide: 4-dimethylallyltryptophan N-methyltransferase easF (340 aa).

This sequence belongs to the methyltransferase superfamily. In terms of assembly, homodimer.

It catalyses the reaction 4-(3-methylbut-2-enyl)-L-tryptophan + S-adenosyl-L-methionine = 4-(3-methylbut-2-enyl)-L-abrine + S-adenosyl-L-homocysteine + H(+). The protein operates within alkaloid biosynthesis; ergot alkaloid biosynthesis. Its function is as follows. 4-dimethylallyltryptophan N-methyltransferase; part of the gene cluster that mediates the biosynthesis of fungal ergot alkaloid. DmaW catalyzes the first step of ergot alkaloid biosynthesis by condensing dimethylallyl diphosphate (DMAP) and tryptophan to form 4-dimethylallyl-L-tryptophan. The second step is catalyzed by the methyltransferase easF that methylates 4-dimethylallyl-L-tryptophan in the presence of S-adenosyl-L-methionine, resulting in the formation of 4-dimethylallyl-L-abrine. The catalase easC and the FAD-dependent oxidoreductase easE then transform 4-dimethylallyl-L-abrine to chanoclavine-I which is further oxidized by easD in the presence of NAD(+), resulting in the formation of chanoclavine-I aldehyde. Chanoclavine-I aldehyde is the precursor of ergoamides and ergopeptines in Clavicipitaceae, and clavine-type alcaloids such as fumiclavine in Trichocomaceae. However, the metabolites downstream of chanoclavine-I aldehyde in Arthrodermataceae have not been identified yet. This Arthroderma benhamiae (strain ATCC MYA-4681 / CBS 112371) (Trichophyton mentagrophytes) protein is 4-dimethylallyltryptophan N-methyltransferase easF.